The sequence spans 961 residues: MAEGRGTHERPDVETQKTELGALMGTTLQRGAQWYLIDSRWFKQWKKYVGFDSWDMYNVGEHNLFPGPIDNSGLFSDPESQTLKEHLIDELDYVLVPTEAWNKLLNWYGCVEGQQPIVRKVVEHGLFVKHCKVEVYLLELKLCENSDPTNVLSCHFSKADTIATIEKEMRKLFNIPAERETRLWNKYMSNTYEQLSKLDNTIQDAGLYQGQVLVIEPQNEDGTWPRQTLQSKSSTAPSRNFTTSSKPSASPYSSMSASLIANGDSTNSSGMHNSGVSRGGAGFSASYNCQEPPSPHIQPGLCGLGNLGNTCFMNSALQCLSNTGPLTEYFLKDEYEAEINRDNPLGMKGEIAEAYAELIKQMWSGRDTHVAPRMFKTQVGRFAPQFSGYQQQDSQELLAFILDGLHEDLNRVKKKPYLEPKDANGRPDAVVAKEAWENHRLRNDSVIVDTFHGLFKSTLVCPECAKVSVTFDPFCYLTLPLPLKKDRIMEVFLVPADPHCRPIQYRVTVPLMGAISDLCEALSKLSGIAAENMVVTDVYNHRFHKIFQMDEGLSHITPRDDIFVYEICTTPMDGSEYITLPVYFREKKSRPSSTSSGAVLYGQPLLVSVPKHRLTLESLYQAVCERISRYIKQPLPEEFLSSPLEPGACNGSRGSYEGDEEEMDHQEEGKEQLSEVEESGEDSQGGDPTETTQKAKGPPRHKRLFTFSLVNSCGTADINSLATDGKLLKLNSRSTLAIDWDSETRSLYFDEQESEACEKHTSMSQPQKKKKAAIALRECIELFTTMETLGEHDPWYCPTCKKHQQATKKFDLWSLPKILVVHLKRFSYNRYWRDKLDTVVEFPVRALNMSEFVCDRAARPYVYDLIAVSNHYGAMGVGHYTAYAKNRLNGKWYYFDDSSVSLASEDQIVTKAAYVLFYQRRDDECPSTSSPVSFPGSDGGAKLSSSQQDLGEEEAYTMDTN.

Positions 11 to 122 (PDVETQKTEL…GQQPIVRKVV (112 aa)) constitute a DUSP domain. A necessary for interaction with SART3 region spans residues 27 to 216 (TLQRGAQWYL…LYQGQVLVIE (190 aa)). The Nuclear export signal signature appears at 133 to 141 (VEVYLLELK). The region spanning 142–226 (LCENSDPTNV…PQNEDGTWPR (85 aa)) is the Ubiquitin-like 1 domain. Residues 219 to 257 (NEDGTWPRQTLQSKSSTAPSRNFTTSSKPSASPYSSMSA) form a disordered region. Polar residues predominate over residues 225–243 (PRQTLQSKSSTAPSRNFTT). The segment at 229–295 (LQSKSSTAPS…SYNCQEPPSP (67 aa)) is required for USP4 activation by providing conformational flexibility between the DUSP and catalytic domains. Residues 244–257 (SSKPSASPYSSMSA) are compositionally biased toward low complexity. The region spanning 302-921 (CGLGNLGNTC…AAYVLFYQRR (620 aa)) is the USP domain. Residue cysteine 311 is part of the active site. Positions 384-386 (PQF) are regulates ubiquitin dissociation. The necessary for interaction with RBL2 stretch occupies residues 405-407 (LHE). Serine 445 carries the post-translational modification Phosphoserine. The tract at residues 459 to 463 (LVCPE) is necessary for interaction with RB1 and RBL2. Zn(2+)-binding residues include cysteine 461 and cysteine 464. Residues 483 to 571 (LKKDRIMEVF…IFVYEICTTP (89 aa)) enclose the Ubiquitin-like 2 domain. Residues 485-773 (KDRIMEVFLV…SQPQKKKKAA (289 aa)) form an interacts with DUSP and ubiquitin-like 1 domains and is required for USP4 activation region. The tract at residues 641 to 700 (SSPLEPGACNGSRGSYEGDEEEMDHQEEGKEQLSEVEESGEDSQGGDPTETTQKAKGPPR) is disordered. Phosphoserine occurs at positions 655, 674, and 679. Residues 765–770 (QPQKKK) carry the Nuclear localization signal motif. Zn(2+) is bound by residues cysteine 797 and cysteine 800. Histidine 879 is an active-site residue. Residues 924 to 961 (ECPSTSSPVSFPGSDGGAKLSSSQQDLGEEEAYTMDTN) are disordered. Acidic residues predominate over residues 950 to 961 (LGEEEAYTMDTN).

The protein belongs to the peptidase C19 family. USP4 subfamily. As to quaternary structure, interacts with RB1 (both dephosphorylated and hypophosphorylated forms). Interacts with RBL1 and RBL2. Interacts with ADORA2A (via cytoplasmic C-terminus); the interaction is direct. Interacts with SART3; recruits USP4 to its substrate PRPF3. Phosphorylated at Ser-445 by PKB/AKT1 in response to EGF stimulus, promoting its ability deubiquitinate RHEB. Post-translationally, monoubiquitinated by TRIM21. Ubiquitination does not lead to its proteasomal degradation. Autodeubiquitinated. As to expression, expressed in hippocampus and striatum (at protein level).

The protein localises to the cytoplasm. The protein resides in the nucleus. It catalyses the reaction Thiol-dependent hydrolysis of ester, thioester, amide, peptide and isopeptide bonds formed by the C-terminal Gly of ubiquitin (a 76-residue protein attached to proteins as an intracellular targeting signal).. Its activity is regulated as follows. The completion of the deubiquitinase reaction is mediated by the DUSP and ubiquitin-like 1 domains which promotes the release of ubiquitin from the catalytic site enabling subsequent reactions to occur. Deubiquitinating enzyme that removes conjugated ubiquitin from target proteins. Deubiquitinates PDPK1. Deubiquitinates TRIM21. Deubiquitinates receptor ADORA2A which increases the amount of functional receptor at the cell surface. Deubiquitinates HAS2. Deubiquitinates RHEB in response to EGF signaling, promoting mTORC1 signaling. May regulate mRNA splicing through deubiquitination of the U4 spliceosomal protein PRPF3. This may prevent its recognition by the U5 component PRPF8 thereby destabilizing interactions within the U4/U6.U5 snRNP. May also play a role in the regulation of quality control in the ER. This is Ubiquitin carboxyl-terminal hydrolase 4 (Usp4) from Rattus norvegicus (Rat).